An 89-amino-acid chain; its full sequence is Small ribosomal subunit protein uS15 (89 aa).

Residues 1–23 form a disordered region; the sequence is MSLGTEEKQNLINTHQVHPTDTG. A compositionally biased stretch (polar residues) spans 10–23; it reads NLINTHQVHPTDTG.

The protein belongs to the universal ribosomal protein uS15 family. Part of the 30S ribosomal subunit. Forms a bridge to the 50S subunit in the 70S ribosome, contacting the 23S rRNA.

Functionally, one of the primary rRNA binding proteins, it binds directly to 16S rRNA where it helps nucleate assembly of the platform of the 30S subunit by binding and bridging several RNA helices of the 16S rRNA. Forms an intersubunit bridge (bridge B4) with the 23S rRNA of the 50S subunit in the ribosome. The polypeptide is Small ribosomal subunit protein uS15 (Prochlorococcus marinus (strain NATL2A)).